The primary structure comprises 180 residues: ATP-dependent protease subunit HslV (180 aa).

Thr-7 is an active-site residue. Positions 163, 166, and 169 each coordinate Na(+).

The protein belongs to the peptidase T1B family. HslV subfamily. As to quaternary structure, a double ring-shaped homohexamer of HslV is capped on each side by a ring-shaped HslU homohexamer. The assembly of the HslU/HslV complex is dependent on binding of ATP.

Its subcellular location is the cytoplasm. It carries out the reaction ATP-dependent cleavage of peptide bonds with broad specificity.. With respect to regulation, allosterically activated by HslU binding. Protease subunit of a proteasome-like degradation complex believed to be a general protein degrading machinery. In Cytophaga hutchinsonii (strain ATCC 33406 / DSM 1761 / CIP 103989 / NBRC 15051 / NCIMB 9469 / D465), this protein is ATP-dependent protease subunit HslV.